We begin with the raw amino-acid sequence, 445 residues long: UDP-N-acetylmuramate--L-alanine ligase (445 aa).

Residue 108–114 coordinates ATP; it reads GSDGKTT.

The protein belongs to the MurCDEF family.

Its subcellular location is the cytoplasm. The enzyme catalyses UDP-N-acetyl-alpha-D-muramate + L-alanine + ATP = UDP-N-acetyl-alpha-D-muramoyl-L-alanine + ADP + phosphate + H(+). It participates in cell wall biogenesis; peptidoglycan biosynthesis. Functionally, cell wall formation. This chain is UDP-N-acetylmuramate--L-alanine ligase, found in Pseudothermotoga lettingae (strain ATCC BAA-301 / DSM 14385 / NBRC 107922 / TMO) (Thermotoga lettingae).